The primary structure comprises 339 residues: GDP-fucose transporter 1 (339 aa).

The next 8 helical transmembrane spans lie at 9–29, 45–65, 82–102, 111–133, 136–156, 165–185, 209–229, and 237–257; these read SVRI…LVFL, LFVT…LSLL, LSVA…ITFN, VSFY…YVIL, STSY…LMGV, ISYS…LNAI, ACFL…VAHF, and FWLM…ITGL. Residues 319-339 are disordered; it reads AHTIQASKDDKALQEDGQTKV. The span at 325–339 shows a compositional bias: basic and acidic residues; the sequence is SKDDKALQEDGQTKV.

This sequence belongs to the TPT transporter family. SLC35C subfamily.

The protein localises to the golgi apparatus membrane. It carries out the reaction GMP(out) + GDP-beta-L-fucose(in) = GMP(in) + GDP-beta-L-fucose(out). Antiporter specific for GDP-l-fucose and depending on the concomitant reverse transport of GMP. Involved in GDP-fucose import from the cytoplasm into the Golgi lumen. The polypeptide is GDP-fucose transporter 1 (slc35c1) (Nematostella vectensis (Starlet sea anemone)).